The sequence spans 168 residues: Lipoprotein signal peptidase (168 aa).

4 helical membrane-spanning segments follow: residues serine 5–valine 25, leucine 37–serine 57, phenylalanine 59–alanine 79, and glycine 85–isoleucine 105. Catalysis depends on residues aspartate 115 and aspartate 133. The helical transmembrane segment at serine 125–phenylalanine 145 threads the bilayer.

Belongs to the peptidase A8 family.

The protein resides in the cell inner membrane. The catalysed reaction is Release of signal peptides from bacterial membrane prolipoproteins. Hydrolyzes -Xaa-Yaa-Zaa-|-(S,diacylglyceryl)Cys-, in which Xaa is hydrophobic (preferably Leu), and Yaa (Ala or Ser) and Zaa (Gly or Ala) have small, neutral side chains.. The protein operates within protein modification; lipoprotein biosynthesis (signal peptide cleavage). In terms of biological role, this protein specifically catalyzes the removal of signal peptides from prolipoproteins. The chain is Lipoprotein signal peptidase from Mesorhizobium japonicum (strain LMG 29417 / CECT 9101 / MAFF 303099) (Mesorhizobium loti (strain MAFF 303099)).